Consider the following 169-residue polypeptide: Ureidoglycolate lyase (169 aa).

The protein belongs to the ureidoglycolate lyase family. As to quaternary structure, homodimer. It depends on Ni(2+) as a cofactor.

It carries out the reaction (S)-ureidoglycolate = urea + glyoxylate. Its pathway is nitrogen metabolism; (S)-allantoin degradation. In terms of biological role, catalyzes the catabolism of the allantoin degradation intermediate (S)-ureidoglycolate, generating urea and glyoxylate. Involved in the utilization of allantoin as nitrogen source. The protein is Ureidoglycolate lyase of Pseudomonas aeruginosa (strain LESB58).